The sequence spans 434 residues: Flagellum-specific ATP synthase (434 aa).

164 to 171 (AGSGVGKS) lines the ATP pocket.

It belongs to the ATPase alpha/beta chains family.

The protein resides in the cytoplasm. The catalysed reaction is ATP + H2O + 4 H(+)(in) = ADP + phosphate + 5 H(+)(out). Probable catalytic subunit of a protein translocase for flagellum-specific export, or a proton translocase involved in local circuits at the flagellum. The sequence is that of Flagellum-specific ATP synthase (fliI) from Helicobacter pylori (strain J99 / ATCC 700824) (Campylobacter pylori J99).